The chain runs to 925 residues: MAGKARVHELAKELGVTSKEVLARLNEQGEFVKSASSTVEAPVARRLRESFGGGKAAEGAAKAPAKAAAKGDAKTAAKGDVKAPDKALDAALDNAIKAGGNGEAAAPPAQPGGTATTPAAQATPEAPARPGPAAARPSAPAPGQPKPPAPGQPPRPGATPGPRPGPAPKPAARTPRVGNNPFSSAQPVDRPIPRPVPRPGAPRPGAPRPGASPGNMPPRPGGVGGPGRPARPGAPRPGGGRPGGPGGRDGGGGNYRGGGVGASPGGGGGFRGRPGGGGGGRPGQRGGAAGAFGRPGGAPRRGRKSKRQKRQEYDSMQAPVVGGVRLPHGNGETIRLARGASLSDFAEKIDANPASLVQALFNLGEMVTATQSVGDETLELLGSEMNYNVQVVSPEDEDRELLESFDLTYGEDEGTEEDLQTRPPVVTVMGHVDHGKTRLLDTIRKANVREAEAGGITQHIGAYQVTVEHDGVERPITFIDTPGHEAFTAMRARGAKATDIAILVVAADDGVMPQTVEAINHAQAADVPIVVAVNKIDVEGADPQKIRGQLTEYGLVPEEFGGDTMFVDISAKQGTNIDQLLEAVLLTADAALDLRANPDMEAQGVAIEAHLDRGRGPVATVLIQRGTLRVGDSIVAGDAYGRVRRMVDEHGDDVEEALPSRPVQVIGFTSVPGAGDNLLVVDEDRIARQIADKRSARKRNALAARSRKRISLEDLDSALKETSQLNLILKGDNAGTVEALEEALMGIQIDDEVALRVIDRGVGGITETNVNLASASDAVIIGFNVRAEGKATELANREGVEIRYYSVIYQAIDEIEKALRGMLKPIYEENQLGRAEIRAIFRSSKVGIIAGCMITSGVVRRNAKARLLRDNVVVSENLTINSLRREKDDVTEVREGFECGMTLGYSDIKEGDVIESYELVQKERT.

2 disordered regions span residues 52–84 and 98–326; these read GGGKAAEGAAKAPAKAAAKGDAKTAAKGDVKAP and AGGN…GVRL. Over residues 57–68 the composition is skewed to low complexity; it reads AEGAAKAPAKAA. Basic and acidic residues predominate over residues 69 to 84; the sequence is AKGDAKTAAKGDVKAP. The span at 98–138 shows a compositional bias: low complexity; sequence AGGNGEAAAPPAQPGGTATTPAAQATPEAPARPGPAAARPS. Pro residues-rich tracts occupy residues 139 to 169 and 193 to 207; these read APAPGQPKPPAPGQPPRPGATPGPRPGPAPK and PRPVPRPGAPRPGAP. Residues 236 to 296 are compositionally biased toward gly residues; sequence RPGGGRPGGP…GAAGAFGRPG (61 aa). Residues 300–309 are compositionally biased toward basic residues; that stretch reads RRGRKSKRQK. The region spanning 421-592 is the tr-type G domain; the sequence is TRPPVVTVMG…AVLLTADAAL (172 aa). Residues 430–437 form a G1 region; that stretch reads GHVDHGKT. 430 to 437 lines the GTP pocket; sequence GHVDHGKT. The interval 455–459 is G2; sequence GITQH. The segment at 480 to 483 is G3; sequence DTPG. Residues 480-484 and 534-537 contribute to the GTP site; these read DTPGH and NKID. Residues 534 to 537 are G4; sequence NKID. Residues 570 to 572 form a G5 region; that stretch reads SAK.

This sequence belongs to the TRAFAC class translation factor GTPase superfamily. Classic translation factor GTPase family. IF-2 subfamily.

Its subcellular location is the cytoplasm. Its function is as follows. One of the essential components for the initiation of protein synthesis. Protects formylmethionyl-tRNA from spontaneous hydrolysis and promotes its binding to the 30S ribosomal subunits. Also involved in the hydrolysis of GTP during the formation of the 70S ribosomal complex. The polypeptide is Translation initiation factor IF-2 (Mycolicibacterium paratuberculosis (strain ATCC BAA-968 / K-10) (Mycobacterium paratuberculosis)).